Here is a 179-residue protein sequence, read N- to C-terminus: Large ribosomal subunit protein uL5 (179 aa).

It belongs to the universal ribosomal protein uL5 family. As to quaternary structure, part of the 50S ribosomal subunit; part of the 5S rRNA/L5/L18/L25 subcomplex. Contacts the 5S rRNA and the P site tRNA. Forms a bridge to the 30S subunit in the 70S ribosome.

In terms of biological role, this is one of the proteins that bind and probably mediate the attachment of the 5S RNA into the large ribosomal subunit, where it forms part of the central protuberance. In the 70S ribosome it contacts protein S13 of the 30S subunit (bridge B1b), connecting the 2 subunits; this bridge is implicated in subunit movement. Contacts the P site tRNA; the 5S rRNA and some of its associated proteins might help stabilize positioning of ribosome-bound tRNAs. The protein is Large ribosomal subunit protein uL5 of Herminiimonas arsenicoxydans.